Consider the following 119-residue polypeptide: Hydrogenase maturation factor HypA (119 aa).

His-2 contributes to the Ni(2+) binding site. 4 residues coordinate Zn(2+): Cys-73, Cys-76, Cys-89, and Cys-92.

Belongs to the HypA/HybF family.

In terms of biological role, involved in the maturation of [NiFe] hydrogenases. Required for nickel insertion into the metal center of the hydrogenase. The polypeptide is Hydrogenase maturation factor HypA (Dehalococcoides mccartyi (strain CBDB1)).